The sequence spans 489 residues: Rhamnulokinase (489 aa).

Residue 13–17 (ASSGR) participates in ATP binding. An intrachain disulfide couples Cys68 to Cys222. Substrate-binding positions include Gly83 and 236 to 238 (HDT). The active-site Proton acceptor is the Asp237. Thr259 is a binding site for ATP. Asn296 is a binding site for substrate. ATP is bound at residue Gln304. A disulfide bond links Cys353 and Cys370. Gly402 contacts ATP. A disulfide bridge links Cys413 with Cys417.

The protein belongs to the rhamnulokinase family. Mg(2+) is required as a cofactor.

The catalysed reaction is L-rhamnulose + ATP = L-rhamnulose 1-phosphate + ADP + H(+). It participates in carbohydrate degradation; L-rhamnose degradation; glycerone phosphate from L-rhamnose: step 2/3. Functionally, involved in the catabolism of L-rhamnose (6-deoxy-L-mannose). Catalyzes the transfer of the gamma-phosphate group from ATP to the 1-hydroxyl group of L-rhamnulose to yield L-rhamnulose 1-phosphate. The chain is Rhamnulokinase from Salmonella schwarzengrund (strain CVM19633).